We begin with the raw amino-acid sequence, 240 residues long: LexA repressor (240 aa).

Residues 26 to 46 constitute a DNA-binding region (H-T-H motif); it reads FDEMKDALDLASKSGIHRLIT. Residues serine 160 and lysine 198 each act as for autocatalytic cleavage activity in the active site.

The protein belongs to the peptidase S24 family. As to quaternary structure, homodimer.

The catalysed reaction is Hydrolysis of Ala-|-Gly bond in repressor LexA.. In terms of biological role, represses a number of genes involved in the response to DNA damage (SOS response), including recA and lexA. In the presence of single-stranded DNA, RecA interacts with LexA causing an autocatalytic cleavage which disrupts the DNA-binding part of LexA, leading to derepression of the SOS regulon and eventually DNA repair. This chain is LexA repressor, found in Agrobacterium fabrum (strain C58 / ATCC 33970) (Agrobacterium tumefaciens (strain C58)).